The primary structure comprises 427 residues: UDP-N-acetylglucosamine 1-carboxyvinyltransferase (427 aa).

22–23 (KN) is a phosphoenolpyruvate binding site. Arg92 is a UDP-N-acetyl-alpha-D-glucosamine binding site. The Proton donor role is filled by Asp116. Residues Asp312 and Met334 each contribute to the UDP-N-acetyl-alpha-D-glucosamine site.

The protein belongs to the EPSP synthase family. MurA subfamily.

It localises to the cytoplasm. The enzyme catalyses phosphoenolpyruvate + UDP-N-acetyl-alpha-D-glucosamine = UDP-N-acetyl-3-O-(1-carboxyvinyl)-alpha-D-glucosamine + phosphate. It functions in the pathway cell wall biogenesis; peptidoglycan biosynthesis. Cell wall formation. Adds enolpyruvyl to UDP-N-acetylglucosamine. This chain is UDP-N-acetylglucosamine 1-carboxyvinyltransferase, found in Borreliella burgdorferi (strain ATCC 35210 / DSM 4680 / CIP 102532 / B31) (Borrelia burgdorferi).